A 228-amino-acid chain; its full sequence is Cytidylate kinase (228 aa).

Residue 10 to 18 (GPSGSGKGT) coordinates ATP.

It belongs to the cytidylate kinase family. Type 1 subfamily.

The protein resides in the cytoplasm. The enzyme catalyses CMP + ATP = CDP + ADP. It catalyses the reaction dCMP + ATP = dCDP + ADP. This is Cytidylate kinase from Acinetobacter baumannii (strain AB0057).